Consider the following 580-residue polypeptide: Jasmonoyl--L-amino acid synthetase JAR6 (580 aa).

S100 contacts ATP. Jasmonate is bound at residue S103. ATP-binding positions include M120, T123, G164, N169, and 332 to 337; that span reads GSSEGW. 167 to 171 contacts an L-alpha-amino acid; that stretch reads TTNVY. 329–332 is a binding site for jasmonate; that stretch reads ADYG. Residue 534–538 participates in an L-alpha-amino acid binding; the sequence is KILDH.

The protein belongs to the IAA-amido conjugating enzyme family.

The enzyme catalyses a jasmonate + an L-alpha-amino acid + ATP = a jasmonyl-L-amino acid + AMP + diphosphate + H(+). Its function is as follows. Catalyzes the synthesis of jasmonate-amino acid conjugates by adenylation. Catalyzes the conjugation of jasmonate (JA) to Ile, Leu and Val. Catalyzes the conjugation of JA to Ile that may mediate defense signaling and resistance to the herbivore Manduca sexta caterpillars. The sequence is that of Jasmonoyl--L-amino acid synthetase JAR6 (JAR6) from Nicotiana attenuata (Coyote tobacco).